The primary structure comprises 71 residues: Ranatuerin-2PLa (71 aa).

The N-terminal stretch at 1–22 (MFTTKKSMLLFFFLGTISLSLC) is a signal peptide. Positions 23 to 41 (EQERGADEDDGVEMTEEEV) are excised as a propeptide. A disulfide bridge connects residues C66 and C71.

Expressed by the skin glands.

It localises to the secreted. In terms of biological role, may have antimicrobial activity against the Gram-negative bacterium E.coli. In Lithobates palustris (Pickerel frog), this protein is Ranatuerin-2PLa.